The sequence spans 554 residues: CTP synthase (554 aa).

The segment at 1–265 is amidoligase domain; that stretch reads MTPLIFVTGG…DELVIEQFKL (265 aa). Ser13 is a CTP binding site. Ser13 serves as a coordination point for UTP. ATP is bound by residues 14 to 19 and Asp71; that span reads SLGKGI. Residues Asp71 and Glu139 each coordinate Mg(2+). Residues 146-148, 186-191, and Lys222 contribute to the CTP site; these read DIE and KTKPTQ. UTP contacts are provided by residues 186–191 and Lys222; that span reads KTKPTQ. One can recognise a Glutamine amidotransferase type-1 domain in the interval 292–545; it reads NIAVVGKYVD…VRAAREKKAG (254 aa). An L-glutamine-binding site is contributed by Gly353. Cys380 (nucleophile; for glutamine hydrolysis) is an active-site residue. Residues 381–384, Glu404, and Arg471 contribute to the L-glutamine site; that span reads YGMQ. Catalysis depends on residues His518 and Glu520.

It belongs to the CTP synthase family. As to quaternary structure, homotetramer.

It catalyses the reaction UTP + L-glutamine + ATP + H2O = CTP + L-glutamate + ADP + phosphate + 2 H(+). The enzyme catalyses L-glutamine + H2O = L-glutamate + NH4(+). The catalysed reaction is UTP + NH4(+) + ATP = CTP + ADP + phosphate + 2 H(+). It functions in the pathway pyrimidine metabolism; CTP biosynthesis via de novo pathway; CTP from UDP: step 2/2. Its activity is regulated as follows. Allosterically activated by GTP, when glutamine is the substrate; GTP has no effect on the reaction when ammonia is the substrate. The allosteric effector GTP functions by stabilizing the protein conformation that binds the tetrahedral intermediate(s) formed during glutamine hydrolysis. Inhibited by the product CTP, via allosteric rather than competitive inhibition. In terms of biological role, catalyzes the ATP-dependent amination of UTP to CTP with either L-glutamine or ammonia as the source of nitrogen. Regulates intracellular CTP levels through interactions with the four ribonucleotide triphosphates. In Xanthomonas euvesicatoria pv. vesicatoria (strain 85-10) (Xanthomonas campestris pv. vesicatoria), this protein is CTP synthase.